Here is a 224-residue protein sequence, read N- to C-terminus: uncharacterized protein (224 aa).

Asparagine 10, asparagine 70, and asparagine 74 each carry an N-linked (GlcNAc...) asparagine glycan.

The protein localises to the endoplasmic reticulum. This is an uncharacterized protein from Saccharomyces cerevisiae (strain ATCC 204508 / S288c) (Baker's yeast).